A 171-amino-acid chain; its full sequence is MTTASPSQVRQNYHQDSEAAINRQINLELYASYVYLSMSYYFDRDDVALKNFAKYFLHQSHEEREHAERLMKLQNQRGARIFLQDIKKPDRDDWENGLNAMECALCLERSVNQSLLELHKLATEKNDPHLCDFIETHYLNEQVEAIKELGDHITNLRKMGALWIGHGRVPL.

The residue at position 1 (M1) is an N-acetylmethionine. T2 is modified (N-acetylthreonine; in Ferritin heavy chain, N-terminally processed). The 150-residue stretch at 11 to 160 (QNYHQDSEAA…DHITNLRKMG (150 aa)) folds into the Ferritin-like diiron domain. Fe cation is bound by residues E28, E63, H66, E108, and Q142.

This sequence belongs to the ferritin family. As to quaternary structure, oligomer of 24 subunits. There are two types of subunits: L (light) chain and H (heavy) chain. The major chain can be light or heavy, depending on the species and tissue type. The functional molecule forms a roughly spherical shell with a diameter of 12 nm and contains a central cavity into which the insoluble mineral iron core is deposited. Interacts with NCOA4; NCOA4 promotes targeting of the iron-binding ferritin complex to autolysosomes following starvation or iron depletion.

It is found in the cytoplasm. The protein resides in the lysosome. The protein localises to the cytoplasmic vesicle. It localises to the autophagosome. The enzyme catalyses 4 Fe(2+) + O2 + 4 H(+) = 4 Fe(3+) + 2 H2O. Stores iron in a soluble, non-toxic, readily available form. Important for iron homeostasis. Has ferroxidase activity. Iron is taken up in the ferrous form and deposited as ferric hydroxides after oxidation. Also plays a role in delivery of iron to cells. Mediates iron uptake in capsule cells of the developing kidney. Delivery to lysosomes is mediated by the cargo receptor NCOA4 for autophagic degradation and release of iron. This Ovis aries (Sheep) protein is Ferritin heavy chain (FTH1).